The chain runs to 147 residues: NAD(P)H-quinone oxidoreductase subunit N (147 aa).

Belongs to the complex I NdhN subunit family. As to quaternary structure, NDH-1 can be composed of about 15 different subunits; different subcomplexes with different compositions have been identified which probably have different functions.

It localises to the cellular thylakoid membrane. The enzyme catalyses a plastoquinone + NADH + (n+1) H(+)(in) = a plastoquinol + NAD(+) + n H(+)(out). The catalysed reaction is a plastoquinone + NADPH + (n+1) H(+)(in) = a plastoquinol + NADP(+) + n H(+)(out). NDH-1 shuttles electrons from an unknown electron donor, via FMN and iron-sulfur (Fe-S) centers, to quinones in the respiratory and/or the photosynthetic chain. The immediate electron acceptor for the enzyme in this species is believed to be plastoquinone. Couples the redox reaction to proton translocation, and thus conserves the redox energy in a proton gradient. Cyanobacterial NDH-1 also plays a role in inorganic carbon-concentration. This is NAD(P)H-quinone oxidoreductase subunit N from Synechococcus sp. (strain JA-3-3Ab) (Cyanobacteria bacterium Yellowstone A-Prime).